The following is a 387-amino-acid chain: Dual specificity mitogen-activated protein kinase kinase mek-2 (387 aa).

A disordered region spans residues 1–37 (MSSGKRRNPLGLSLPPTVNEQSESGEATAEEATATVP). Residues 16–25 (PTVNEQSESG) show a composition bias toward polar residues. The segment covering 26-35 (EATAEEATAT) has biased composition (low complexity). One can recognise a Protein kinase domain in the interval 73–360 (LQTEGELGHG…LKSLTADVFF (288 aa)). Residues 79–87 (LGHGNGGVV) and lysine 102 contribute to the ATP site. The Proton acceptor role is filled by aspartate 195. Serine 223 and serine 227 each carry phosphoserine.

It belongs to the protein kinase superfamily. STE Ser/Thr protein kinase family. MAP kinase kinase subfamily. Interacts with ksr-1.

The enzyme catalyses L-seryl-[protein] + ATP = O-phospho-L-seryl-[protein] + ADP + H(+). It carries out the reaction L-threonyl-[protein] + ATP = O-phospho-L-threonyl-[protein] + ADP + H(+). The catalysed reaction is L-tyrosyl-[protein] + ATP = O-phospho-L-tyrosyl-[protein] + ADP + H(+). Activated by tyrosine and threonine phosphorylation catalyzed by MAP kinase kinase kinases. Functions in the let-60 Ras signaling pathway; acts downstream of lin-45 raf kinase, but before the sur-1/mpk-1 gene product in controlling vulval cell differentiation. Required for progression of developing oocytes through the pachytene stage. Plays a role in responses to M.nematophilum-mediated bacterial infection by promoting tail swelling and preventing constipation. Involved in fluid homeostasis. Positively regulates lifespan upstream of mpk-1. This Caenorhabditis elegans protein is Dual specificity mitogen-activated protein kinase kinase mek-2 (mek-2).